The sequence spans 486 residues: Argininosuccinate lyase (486 aa).

Belongs to the lyase 1 family. Argininosuccinate lyase subfamily.

It is found in the cytoplasm. It carries out the reaction 2-(N(omega)-L-arginino)succinate = fumarate + L-arginine. It functions in the pathway amino-acid biosynthesis; L-arginine biosynthesis; L-arginine from L-ornithine and carbamoyl phosphate: step 3/3. This chain is Argininosuccinate lyase, found in Acidobacterium capsulatum (strain ATCC 51196 / DSM 11244 / BCRC 80197 / JCM 7670 / NBRC 15755 / NCIMB 13165 / 161).